A 71-amino-acid polypeptide reads, in one-letter code: Large ribosomal subunit protein bL31 (71 aa).

Cys16, Cys18, Cys38, and Cys41 together coordinate Zn(2+).

It belongs to the bacterial ribosomal protein bL31 family. Type A subfamily. In terms of assembly, part of the 50S ribosomal subunit. Zn(2+) serves as cofactor.

Its function is as follows. Binds the 23S rRNA. This is Large ribosomal subunit protein bL31 from Chromobacterium violaceum (strain ATCC 12472 / DSM 30191 / JCM 1249 / CCUG 213 / NBRC 12614 / NCIMB 9131 / NCTC 9757 / MK).